We begin with the raw amino-acid sequence, 173 residues long: Ribosome maturation factor RimM (173 aa).

The PRC barrel domain occupies 97 to 170; that stretch reads EHEYYYHEII…RIRVHIMEGL (74 aa).

Belongs to the RimM family. As to quaternary structure, binds ribosomal protein uS19.

The protein resides in the cytoplasm. An accessory protein needed during the final step in the assembly of 30S ribosomal subunit, possibly for assembly of the head region. Essential for efficient processing of 16S rRNA. May be needed both before and after RbfA during the maturation of 16S rRNA. It has affinity for free ribosomal 30S subunits but not for 70S ribosomes. The sequence is that of Ribosome maturation factor RimM from Shouchella clausii (strain KSM-K16) (Alkalihalobacillus clausii).